The following is a 23-amino-acid chain: Conotoxin Cl6c (23 aa).

Disulfide bonds link C2–C12, C5–C17, and C11–C21.

Expressed by the venom duct.

The protein resides in the secreted. This is Conotoxin Cl6c from Californiconus californicus (California cone).